The primary structure comprises 193 residues: Acyl carrier protein phosphodiesterase (193 aa).

Belongs to the AcpH family.

The catalysed reaction is holo-[ACP] + H2O = apo-[ACP] + (R)-4'-phosphopantetheine + H(+). Converts holo-ACP to apo-ACP by hydrolytic cleavage of the phosphopantetheine prosthetic group from ACP. The protein is Acyl carrier protein phosphodiesterase of Escherichia coli O127:H6 (strain E2348/69 / EPEC).